Here is a 310-residue protein sequence, read N- to C-terminus: tRNA dimethylallyltransferase (310 aa).

14-21 (GPTASGKT) serves as a coordination point for ATP. 16–21 (TASGKT) is a substrate binding site. Interaction with substrate tRNA regions lie at residues 39–42 (DSAL), 163–167 (QRLSR), and 244–249 (RCVGYR).

This sequence belongs to the IPP transferase family. In terms of assembly, monomer. Mg(2+) serves as cofactor.

The catalysed reaction is adenosine(37) in tRNA + dimethylallyl diphosphate = N(6)-dimethylallyladenosine(37) in tRNA + diphosphate. Catalyzes the transfer of a dimethylallyl group onto the adenine at position 37 in tRNAs that read codons beginning with uridine, leading to the formation of N6-(dimethylallyl)adenosine (i(6)A). The chain is tRNA dimethylallyltransferase from Tolumonas auensis (strain DSM 9187 / NBRC 110442 / TA 4).